Consider the following 280-residue polypeptide: Phosphatidylglycerol--prolipoprotein diacylglyceryl transferase (280 aa).

The next 3 membrane-spanning stretches (helical) occupy residues 21–41, 54–74, and 88–108; these read WYGI…ISEG, LLLW…VIFE, and IWNG…VLLI. An a 1,2-diacyl-sn-glycero-3-phospho-(1'-sn-glycerol)-binding site is contributed by Arg136. A run of 3 helical transmembrane segments spans residues 176-196, 206-226, and 236-256; these read QPTF…ILSL, GEVF…VEGM, and IIRV…ILWI.

Belongs to the Lgt family.

Its subcellular location is the cell membrane. The enzyme catalyses L-cysteinyl-[prolipoprotein] + a 1,2-diacyl-sn-glycero-3-phospho-(1'-sn-glycerol) = an S-1,2-diacyl-sn-glyceryl-L-cysteinyl-[prolipoprotein] + sn-glycerol 1-phosphate + H(+). The protein operates within protein modification; lipoprotein biosynthesis (diacylglyceryl transfer). In terms of biological role, catalyzes the transfer of the diacylglyceryl group from phosphatidylglycerol to the sulfhydryl group of the N-terminal cysteine of a prolipoprotein, the first step in the formation of mature lipoproteins. In Lactobacillus acidophilus (strain ATCC 700396 / NCK56 / N2 / NCFM), this protein is Phosphatidylglycerol--prolipoprotein diacylglyceryl transferase.